A 227-amino-acid polypeptide reads, in one-letter code: 2-heptyl-1-hydroxyquinolin-4(1H)-one methyltransferase (227 aa).

The protein belongs to the methyltransferase superfamily. In terms of assembly, monomer.

It is found in the cytoplasm. The catalysed reaction is 2-heptyl-1-hydroxy-4(1H)-quinolinone + S-adenosyl-L-methionine = 2-heptyl-1-methoxy-4(1H)-quinolinone + S-adenosyl-L-homocysteine + H(+). It carries out the reaction 3-bromo-2-heptyl-1-hydroxy-4(1H)-quinolinone + S-adenosyl-L-methionine = 3-bromo-2-heptyl-1-methoxy-4(1H)-quinolinone + S-adenosyl-L-homocysteine + H(+). Involved in cellular response to chemical stress and may contribute to resistance toward antimicrobial natural compounds as well as drugs. Catalyzes the methylation and detoxification of the P.aeruginosa toxin 2-heptyl-1-hydroxy-4(1H)-quinolinone (HQNO) to 2-heptyl-1-methoxy-4(1H)-quinolinone (HMOQ). Can also methylate 3-bromo-2-heptyl-1-hydroxy-4(1H)-quinolinone, and shows much lower activity with 1-hydroxyquinolin-4(1H)-one, quercetin, 4-hydroxyquinolin-2(1H)-one (DHQ) and 4-hydroxyisoquinolin-1(2H)-one. The polypeptide is 2-heptyl-1-hydroxyquinolin-4(1H)-one methyltransferase (Mycobacteroides abscessus (strain ATCC 19977 / DSM 44196 / CCUG 20993 / CIP 104536 / JCM 13569 / NCTC 13031 / TMC 1543 / L948) (Mycobacterium abscessus)).